The primary structure comprises 763 residues: uncharacterized protein (763 aa).

Residues 380-607 (DSVLNPFNTN…YNIKVITMRL (228 aa)) form the TR mART core domain. A helical transmembrane segment spans residues 684 to 700 (SYVSIYALLCPLLTNIY).

The protein resides in the membrane. This is an uncharacterized protein from Acanthamoeba polyphaga mimivirus (APMV).